A 262-amino-acid chain; its full sequence is Acyl-[acyl-carrier-protein]--UDP-N-acetylglucosamine O-acyltransferase (262 aa).

It belongs to the transferase hexapeptide repeat family. LpxA subfamily. In terms of assembly, homotrimer.

The protein localises to the cytoplasm. It catalyses the reaction a (3R)-hydroxyacyl-[ACP] + UDP-N-acetyl-alpha-D-glucosamine = a UDP-3-O-[(3R)-3-hydroxyacyl]-N-acetyl-alpha-D-glucosamine + holo-[ACP]. Its pathway is glycolipid biosynthesis; lipid IV(A) biosynthesis; lipid IV(A) from (3R)-3-hydroxytetradecanoyl-[acyl-carrier-protein] and UDP-N-acetyl-alpha-D-glucosamine: step 1/6. In terms of biological role, involved in the biosynthesis of lipid A, a phosphorylated glycolipid that anchors the lipopolysaccharide to the outer membrane of the cell. The chain is Acyl-[acyl-carrier-protein]--UDP-N-acetylglucosamine O-acyltransferase from Vibrio atlanticus (strain LGP32) (Vibrio splendidus (strain Mel32)).